A 520-amino-acid chain; its full sequence is NAD(P)H-quinone oxidoreductase subunit 2 (520 aa).

14 helical membrane passes run 15-35, 42-62, 79-99, 106-126, 132-152, 167-187, 210-230, 244-264, 280-300, 306-326, 334-354, 378-398, 400-420, and 466-486; these read ILPEGIVIVTLMGVLIVDLIL, WIGYLAIAGLLAAIVALYFQW, LSIIFRGIIALSAVVTILMSI, GTALAEFIAILLTATLGGMFV, LVMIFISLETLSISSYLLTGY, LLIGASSTAVFLYGVSLLYGL, LGAVIALVFVIAGIGFKISAA, PTPVIAFLSVGSKAAGFALAI, FVFTALAVLSMILGNVVALAQ, MLAYSSIAQAGFVMIGLIAGT, IFYLLVYLFMNLCGFTCIILF, LGLSISLLSLGGIPPLAGFFG, IYLFWAGWQAGLYWLVLLGLV, and VGLVLTLIATSVAGILSNPLF.

The protein belongs to the complex I subunit 2 family. In terms of assembly, NDH-1 can be composed of about 15 different subunits; different subcomplexes with different compositions have been identified which probably have different functions.

It localises to the cellular thylakoid membrane. The catalysed reaction is a plastoquinone + NADH + (n+1) H(+)(in) = a plastoquinol + NAD(+) + n H(+)(out). It carries out the reaction a plastoquinone + NADPH + (n+1) H(+)(in) = a plastoquinol + NADP(+) + n H(+)(out). Functionally, NDH-1 shuttles electrons from an unknown electron donor, via FMN and iron-sulfur (Fe-S) centers, to quinones in the respiratory and/or the photosynthetic chain. The immediate electron acceptor for the enzyme in this species is believed to be plastoquinone. Couples the redox reaction to proton translocation, and thus conserves the redox energy in a proton gradient. Cyanobacterial NDH-1 also plays a role in inorganic carbon-concentration. The sequence is that of NAD(P)H-quinone oxidoreductase subunit 2 from Trichormus variabilis (strain ATCC 29413 / PCC 7937) (Anabaena variabilis).